A 267-amino-acid chain; its full sequence is Phosphate import ATP-binding protein PstB (267 aa).

One can recognise an ABC transporter domain in the interval 21 to 262 (IEVKNLNFYY…PREKRTQDYI (242 aa)). 53 to 60 (GPSGCGKS) serves as a coordination point for ATP.

This sequence belongs to the ABC transporter superfamily. Phosphate importer (TC 3.A.1.7) family. As to quaternary structure, the complex is composed of two ATP-binding proteins (PstB), two transmembrane proteins (PstC and PstA) and a solute-binding protein (PstS).

It is found in the cell inner membrane. It catalyses the reaction phosphate(out) + ATP + H2O = ADP + 2 phosphate(in) + H(+). Part of the ABC transporter complex PstSACB involved in phosphate import. Responsible for energy coupling to the transport system. This chain is Phosphate import ATP-binding protein PstB, found in Mesorhizobium japonicum (strain LMG 29417 / CECT 9101 / MAFF 303099) (Mesorhizobium loti (strain MAFF 303099)).